We begin with the raw amino-acid sequence, 315 residues long: Endolytic peptidoglycan transglycosylase RlpA (315 aa).

An N-terminal signal peptide occupies residues 1–19 (MGLALEKVCFLGVIFLISA). Cys20 carries the N-palmitoyl cysteine lipid modification. Residue Cys20 is the site of S-diacylglycerol cysteine attachment. Basic and acidic residues predominate over residues 68–79 (SDSQDSNTKDQP). Residues 68–92 (SDSQDSNTKDQPLDNGMRDSSSIQR) are disordered. One can recognise an SPOR domain in the interval 242-315 (SVSGGKFSLQ…YNQNAVLTRE (74 aa)).

The protein belongs to the RlpA family.

It is found in the cell membrane. Lytic transglycosylase with a strong preference for naked glycan strands that lack stem peptides. The sequence is that of Endolytic peptidoglycan transglycosylase RlpA from Helicobacter pylori (strain ATCC 700392 / 26695) (Campylobacter pylori).